The chain runs to 307 residues: Glutaminase (307 aa).

Residues S66, N116, E160, N167, Y191, Y243, and V261 each coordinate substrate.

The protein belongs to the glutaminase family. In terms of assembly, homotetramer.

The enzyme catalyses L-glutamine + H2O = L-glutamate + NH4(+). This Saccharophagus degradans (strain 2-40 / ATCC 43961 / DSM 17024) protein is Glutaminase.